The following is a 310-amino-acid chain: Dehydrodolichyl diphosphate synthase 2 (310 aa).

Belongs to the UPP synthase family. The cofactor is Mg(2+).

It participates in protein modification; protein glycosylation. Catalyzes cis-prenyl chain elongation to produce the polyprenyl backbone of dolichol, a glycosyl carrier-lipid required for the biosynthesis of several classes of glycoprotein. In Arabidopsis thaliana (Mouse-ear cress), this protein is Dehydrodolichyl diphosphate synthase 2.